The following is a 404-amino-acid chain: G1/S-specific cyclin-E2 (404 aa).

The disordered stretch occupies residues 1–41; sequence MSRRSSRLQAKQHAQPNQPDSPQETQIIQAKKRKTAQDVKK. Over residues 7–28 the composition is skewed to polar residues; it reads RLQAKQHAQPNQPDSPQETQII. Position 21 is a phosphoserine (Ser-21). At Lys-348 the chain carries N6-lactoyllysine. Ser-383 carries the post-translational modification Phosphoserine. Thr-392 carries the phosphothreonine modification.

The protein belongs to the cyclin family. Cyclin E subfamily. In terms of assembly, interacts with the CDK2 (in vivo) and CDK3 (in vitro) protein kinases to form a serine/threonine kinase holoenzyme complex. The cyclin subunit imparts substrate specificity to the complex. Post-translationally, phosphorylation by CDK2 triggers its release from CDK2 and degradation via the ubiquitin proteasome pathway. Lactylated at Lys-348. Delactylated by SIRT3. In terms of tissue distribution, highest levels in adult testis, thymus and brain. Lower levels in placenta, spleen and colon.

The protein localises to the nucleus. Essential for the control of the cell cycle at the late G1 and early S phase. The polypeptide is G1/S-specific cyclin-E2 (Ccne2) (Mus musculus (Mouse)).